We begin with the raw amino-acid sequence, 358 residues long: Small ribosomal subunit biogenesis GTPase RsgA 2 (358 aa).

Positions A106–I261 constitute a CP-type G domain. Residues S151–D154 and G203–T211 contribute to the GTP site. Residues C284, C289, H291, and C297 each contribute to the Zn(2+) site.

This sequence belongs to the TRAFAC class YlqF/YawG GTPase family. RsgA subfamily. Monomer. Associates with 30S ribosomal subunit, binds 16S rRNA. Zn(2+) is required as a cofactor.

The protein localises to the cytoplasm. Functionally, one of several proteins that assist in the late maturation steps of the functional core of the 30S ribosomal subunit. Helps release RbfA from mature subunits. May play a role in the assembly of ribosomal proteins into the subunit. Circularly permuted GTPase that catalyzes slow GTP hydrolysis, GTPase activity is stimulated by the 30S ribosomal subunit. The sequence is that of Small ribosomal subunit biogenesis GTPase RsgA 2 from Vibrio parahaemolyticus serotype O3:K6 (strain RIMD 2210633).